The following is a 313-amino-acid chain: MIFSTLEHILTHISFSIVSIVITIHLITFLVDEIVKLYDSSEKGIIVTFFCITGLLVTRWISSGHFPLSDLYESLIFLSWSFSLIHIIPYFKKNVLILSKITGPSAILTQGFATSGILTEIHQSGILVPALQSEWLIMHVSMMILGYAALLCGSLLSVALLVITFRKNRKLFYKSNGFLNESFFLGENVVENTSFFCAKNYYRSQLIQQLDYWSYRVISLGFTFLTIGILSGAVWANEAWGSYWNWDPKETWAFITWIVFAIYLHTRTNRNLRGPNSAIVASIGFLIIWICYFGVNLLGIGLHSYGSFPSTFN.

Helical transmembrane passes span 9 to 29 (ILTH…LITF), 44 to 64 (GIIV…ISSG), 71 to 91 (LYES…IPYF), 111 to 131 (GFAT…VPAL), 143 to 163 (MILG…LLVI), 217 to 237 (VISL…VWAN), 244 to 264 (WNWD…AIYL), and 278 to 298 (AIVA…VNLL).

The protein belongs to the CcmF/CycK/Ccl1/NrfE/CcsA family. In terms of assembly, may interact with Ccs1.

It is found in the plastid. The protein resides in the chloroplast thylakoid membrane. Its function is as follows. Required during biogenesis of c-type cytochromes (cytochrome c6 and cytochrome f) at the step of heme attachment. This chain is Cytochrome c biogenesis protein CcsA, found in Solanum bulbocastanum (Wild potato).